We begin with the raw amino-acid sequence, 581 residues long: Arginine--tRNA ligase (581 aa).

Positions 122–132 (PNVAKPMHVGH) match the 'HIGH' region motif.

It belongs to the class-I aminoacyl-tRNA synthetase family. Monomer.

It localises to the cytoplasm. The enzyme catalyses tRNA(Arg) + L-arginine + ATP = L-arginyl-tRNA(Arg) + AMP + diphosphate. The polypeptide is Arginine--tRNA ligase (Francisella tularensis subsp. novicida (strain U112)).